The following is a 227-amino-acid chain: Cytochrome c oxidase subunit 2 (227 aa).

At 1 to 14 (MAYPFQLGLQDATS) the chain is on the mitochondrial intermembrane side. A helical transmembrane segment spans residues 15–45 (PIMEELTNFHDHTLMIVFLISSLVLYIISLM). Residues 46–59 (LTTKLTHTSTMDAQ) lie on the Mitochondrial matrix side of the membrane. The helical transmembrane segment at 60–87 (EVETIWTILPAAILILIALPSLRILYMM) threads the bilayer. Residues 88-227 (DEINNPVLTV…YFENWSTSMI (140 aa)) are Mitochondrial intermembrane-facing. Cu cation contacts are provided by His-161, Cys-196, Glu-198, Cys-200, His-204, and Met-207. Position 198 (Glu-198) interacts with Mg(2+). The residue at position 218 (Tyr-218) is a Phosphotyrosine.

It belongs to the cytochrome c oxidase subunit 2 family. Component of the cytochrome c oxidase (complex IV, CIV), a multisubunit enzyme composed of 14 subunits. The complex is composed of a catalytic core of 3 subunits MT-CO1, MT-CO2 and MT-CO3, encoded in the mitochondrial DNA, and 11 supernumerary subunits COX4I, COX5A, COX5B, COX6A, COX6B, COX6C, COX7A, COX7B, COX7C, COX8 and NDUFA4, which are encoded in the nuclear genome. The complex exists as a monomer or a dimer and forms supercomplexes (SCs) in the inner mitochondrial membrane with NADH-ubiquinone oxidoreductase (complex I, CI) and ubiquinol-cytochrome c oxidoreductase (cytochrome b-c1 complex, complex III, CIII), resulting in different assemblies (supercomplex SCI(1)III(2)IV(1) and megacomplex MCI(2)III(2)IV(2)). Found in a complex with TMEM177, COA6, COX18, COX20, SCO1 and SCO2. Interacts with TMEM177 in a COX20-dependent manner. Interacts with COX20. Interacts with COX16. Cu cation serves as cofactor.

It is found in the mitochondrion inner membrane. The catalysed reaction is 4 Fe(II)-[cytochrome c] + O2 + 8 H(+)(in) = 4 Fe(III)-[cytochrome c] + 2 H2O + 4 H(+)(out). Component of the cytochrome c oxidase, the last enzyme in the mitochondrial electron transport chain which drives oxidative phosphorylation. The respiratory chain contains 3 multisubunit complexes succinate dehydrogenase (complex II, CII), ubiquinol-cytochrome c oxidoreductase (cytochrome b-c1 complex, complex III, CIII) and cytochrome c oxidase (complex IV, CIV), that cooperate to transfer electrons derived from NADH and succinate to molecular oxygen, creating an electrochemical gradient over the inner membrane that drives transmembrane transport and the ATP synthase. Cytochrome c oxidase is the component of the respiratory chain that catalyzes the reduction of oxygen to water. Electrons originating from reduced cytochrome c in the intermembrane space (IMS) are transferred via the dinuclear copper A center (CU(A)) of subunit 2 and heme A of subunit 1 to the active site in subunit 1, a binuclear center (BNC) formed by heme A3 and copper B (CU(B)). The BNC reduces molecular oxygen to 2 water molecules using 4 electrons from cytochrome c in the IMS and 4 protons from the mitochondrial matrix. This chain is Cytochrome c oxidase subunit 2 (MT-CO2), found in Arvicanthis somalicus (Neumann's grass rat).